A 63-amino-acid chain; its full sequence is Cytochrome c oxidase subunit 7C, mitochondrial (63 aa).

A mitochondrion-targeting transit peptide spans 1-16; sequence MLGQSIRRFTTSVVRR. Over 17–34 the chain is Mitochondrial matrix; it reads SHYEEGPGKNLPFSVENK. Residue K25 is modified to N6-acetyllysine; alternate. K25 is modified (N6-succinyllysine; alternate). Residues 35–57 traverse the membrane as a helical segment; it reads WRLLAMMTVYFGSGFAAPFFIVR. Over 58-63 the chain is Mitochondrial intermembrane; sequence HQLLKK.

Belongs to the cytochrome c oxidase VIIc family. In terms of assembly, component of the cytochrome c oxidase (complex IV, CIV), a multisubunit enzyme composed of 14 subunits. The complex is composed of a catalytic core of 3 subunits MT-CO1, MT-CO2 and MT-CO3, encoded in the mitochondrial DNA, and 11 supernumerary subunits COX4I, COX5A, COX5B, COX6A, COX6B, COX6C, COX7A, COX7B, COX7C, COX8 and NDUFA4, which are encoded in the nuclear genome. The complex exists as a monomer or a dimer and forms supercomplexes (SCs) in the inner mitochondrial membrane with NADH-ubiquinone oxidoreductase (complex I, CI) and ubiquinol-cytochrome c oxidoreductase (cytochrome b-c1 complex, complex III, CIII), resulting in different assemblies (supercomplex SCI(1)III(2)IV(1) and megacomplex MCI(2)III(2)IV(2)). Interacts with RAB5IF.

Its subcellular location is the mitochondrion inner membrane. It participates in energy metabolism; oxidative phosphorylation. Functionally, component of the cytochrome c oxidase, the last enzyme in the mitochondrial electron transport chain which drives oxidative phosphorylation. The respiratory chain contains 3 multisubunit complexes succinate dehydrogenase (complex II, CII), ubiquinol-cytochrome c oxidoreductase (cytochrome b-c1 complex, complex III, CIII) and cytochrome c oxidase (complex IV, CIV), that cooperate to transfer electrons derived from NADH and succinate to molecular oxygen, creating an electrochemical gradient over the inner membrane that drives transmembrane transport and the ATP synthase. Cytochrome c oxidase is the component of the respiratory chain that catalyzes the reduction of oxygen to water. Electrons originating from reduced cytochrome c in the intermembrane space (IMS) are transferred via the dinuclear copper A center (CU(A)) of subunit 2 and heme A of subunit 1 to the active site in subunit 1, a binuclear center (BNC) formed by heme A3 and copper B (CU(B)). The BNC reduces molecular oxygen to 2 water molecules using 4 electrons from cytochrome c in the IMS and 4 protons from the mitochondrial matrix. This is Cytochrome c oxidase subunit 7C, mitochondrial (Cox7c) from Mus musculus (Mouse).